Consider the following 155-residue polypeptide: Putative pre-16S rRNA nuclease (155 aa).

The protein belongs to the YqgF nuclease family.

The protein resides in the cytoplasm. Could be a nuclease involved in processing of the 5'-end of pre-16S rRNA. This chain is Putative pre-16S rRNA nuclease, found in Wolbachia sp. subsp. Brugia malayi (strain TRS).